A 673-amino-acid chain; its full sequence is UvrABC system protein B (673 aa).

Residues 26–414 form the Helicase ATP-binding domain; the sequence is ANFEAGLAKQ…AGEVTELVVR (389 aa). 39–46 lines the ATP pocket; sequence GVTGSGKT. The short motif at 92–115 is the Beta-hairpin element; the sequence is YYDYYQPEAYVPSSDTFIEKDSSI. The Helicase C-terminal domain maps to 431–597; that stretch reads QVDDLMSEVH…SVERPIADIM (167 aa). 2 stretches are compositionally biased toward basic and acidic residues: residues 600–609 and 618–628; these read ARDDAAEKKS and HVAEETPDYRA. The tract at residues 600 to 628 is disordered; sequence ARDDAAEKKSGKGRSKSRHVAEETPDYRA. The 36-residue stretch at 635–670 folds into the UVR domain; it reads AGKLKSLEQKMYQHAKDLEFEAAAQIRDQIQKLKAA.

This sequence belongs to the UvrB family. Forms a heterotetramer with UvrA during the search for lesions. Interacts with UvrC in an incision complex.

The protein resides in the cytoplasm. In terms of biological role, the UvrABC repair system catalyzes the recognition and processing of DNA lesions. A damage recognition complex composed of 2 UvrA and 2 UvrB subunits scans DNA for abnormalities. Upon binding of the UvrA(2)B(2) complex to a putative damaged site, the DNA wraps around one UvrB monomer. DNA wrap is dependent on ATP binding by UvrB and probably causes local melting of the DNA helix, facilitating insertion of UvrB beta-hairpin between the DNA strands. Then UvrB probes one DNA strand for the presence of a lesion. If a lesion is found the UvrA subunits dissociate and the UvrB-DNA preincision complex is formed. This complex is subsequently bound by UvrC and the second UvrB is released. If no lesion is found, the DNA wraps around the other UvrB subunit that will check the other stand for damage. This chain is UvrABC system protein B, found in Xanthomonas axonopodis pv. citri (strain 306).